The chain runs to 469 residues: SVGFKAGVKEYKLTYYTPEYKTKDTDILAAFRVTPQPGVPPEEAGAAVAAESSTGTWTTVWTDGLTSLDRYKGRCYRIERVVGEKDQYIAYVAYPLDLFEEGSVTNMFTSIVGNVFGFKALRALRLEDLRIPPAYVKTFQGPPHGIQVERDKLNKYGRPLLGCTIKPKLGLSAKNYGRAVYECLRGGLDFTKDDENVNSQPFMRWRDRFLFCAEALFKAQAETGEIKGHYLNATAGTCEEMIKRAVFARELGVPIVMHDYLTGGFTANTTLAHYCRDNGLLLHIHRAMHAVIDRQKNHGIHFRVLAKALRMSGGDHIHSGTVVGKLEGERDITLGFVDLLRDDFVEQDRSRGIYFTQDWVSLPGVLPVASGGIHVWHMPALTEIFGDDSVLQFGGGTLGHPWGNAPGAVANRVALEACVKARNEGRDLAQEGNEVIREACKWSPELAAACEVWKEIVFNFAAVDILDNK.

An N6,N6,N6-trimethyllysine modification is found at Lys5. Substrate-binding residues include Asn114 and Thr164. Lys166 (proton acceptor) is an active-site residue. Position 168 (Lys168) interacts with substrate. Mg(2+) contacts are provided by Lys192, Asp194, and Glu195. Lys192 carries the N6-carboxylysine modification. Catalysis depends on His285, which acts as the Proton acceptor. The substrate site is built by Arg286, His318, and Ser370.

It belongs to the RuBisCO large chain family. Type I subfamily. Heterohexadecamer of 8 large chains and 8 small chains; disulfide-linked. The disulfide link is formed within the large subunit homodimers. The cofactor is Mg(2+). In terms of processing, the disulfide bond which can form in the large chain dimeric partners within the hexadecamer appears to be associated with oxidative stress and protein turnover.

The protein resides in the plastid. It localises to the chloroplast. It carries out the reaction 2 (2R)-3-phosphoglycerate + 2 H(+) = D-ribulose 1,5-bisphosphate + CO2 + H2O. The catalysed reaction is D-ribulose 1,5-bisphosphate + O2 = 2-phosphoglycolate + (2R)-3-phosphoglycerate + 2 H(+). Its function is as follows. RuBisCO catalyzes two reactions: the carboxylation of D-ribulose 1,5-bisphosphate, the primary event in carbon dioxide fixation, as well as the oxidative fragmentation of the pentose substrate in the photorespiration process. Both reactions occur simultaneously and in competition at the same active site. The chain is Ribulose bisphosphate carboxylase large chain from Nicandra physalodes (Apple-of-Peru).